The primary structure comprises 384 residues: Lipid-A-disaccharide synthase (384 aa).

Belongs to the LpxB family.

It carries out the reaction a lipid X + a UDP-2-N,3-O-bis[(3R)-3-hydroxyacyl]-alpha-D-glucosamine = a lipid A disaccharide + UDP + H(+). The protein operates within bacterial outer membrane biogenesis; LPS lipid A biosynthesis. In terms of biological role, condensation of UDP-2,3-diacylglucosamine and 2,3-diacylglucosamine-1-phosphate to form lipid A disaccharide, a precursor of lipid A, a phosphorylated glycolipid that anchors the lipopolysaccharide to the outer membrane of the cell. The sequence is that of Lipid-A-disaccharide synthase from Neisseria meningitidis serogroup C / serotype 2a (strain ATCC 700532 / DSM 15464 / FAM18).